The primary structure comprises 640 residues: Biosynthetic arginine decarboxylase (640 aa).

An N6-(pyridoxal phosphate)lysine modification is found at Lys105. 290–300 (FDVGGGLAVDY) is a binding site for substrate.

Belongs to the Orn/Lys/Arg decarboxylase class-II family. SpeA subfamily. Mg(2+) is required as a cofactor. The cofactor is pyridoxal 5'-phosphate.

It catalyses the reaction L-arginine + H(+) = agmatine + CO2. Catalyzes the biosynthesis of agmatine from arginine. In Vibrio cholerae serotype O1 (strain ATCC 39315 / El Tor Inaba N16961), this protein is Biosynthetic arginine decarboxylase.